Reading from the N-terminus, the 747-residue chain is Sushi domain-containing protein 1 (747 aa).

Residues 1–29 form the signal peptide; the sequence is MGRGPWDAGPSRRLLPLLLLLGLARGAAG. Residues 30–721 are Extracellular-facing; sequence APGPDGLDVC…WAQVKDSSLM (692 aa). The region spanning 35-72 is the EGF-like 1 domain; the sequence is GLDVCATCHEHATCQQREGKKICICNYGFVGNGRTQCV. Intrachain disulfides connect C39–C48, C42–C57, C59–C71, C77–C91, and C85–C100. Residues 73-112 form the EGF-like 2; calcium-binding domain; that stretch reads DKNECQFGATLVCGNHTSCHNTPGGFYCICLEGYRATNNN. N87 and N112 each carry an N-linked (GlcNAc...) asparagine glycan. Positions 125 to 162 constitute an EGF-like 3; calcium-binding domain; that stretch reads DIDECEVSGLCRHGGRCVNTHGSFECYCMDGYLPRNGP. Intrachain disulfides connect C129–C141, C135–C150, C179–C221, C206–C234, C239–C281, and C266–C294. 2 Sushi domains span residues 177-236 and 237-296; these read IDCG…HCQE and INCG…TCTE. N-linked (GlcNAc...) asparagine glycosylation occurs at N193. N-linked (GlcNAc...) asparagine glycosylation occurs at N253. N348, N367, and N563 each carry an N-linked (GlcNAc...) asparagine glycan. A helical transmembrane segment spans residues 722–742; it reads LLQMAGVGLGSLAVVIILTFL. Over 743-747 the chain is Cytoplasmic; that stretch reads SFSAV.

The protein resides in the membrane. The polypeptide is Sushi domain-containing protein 1 (SUSD1) (Homo sapiens (Human)).